We begin with the raw amino-acid sequence, 1419 residues long: Multidrug resistance protein 1 (1419 aa).

Residues 1–37 are r domain; regulates transporter activity; that stretch reads MGKEQKEKKDGNLSIKEEVEKELNKKSTAELFRKIKN. Residues 1 to 60 lie on the Cytoplasmic side of the membrane; sequence MGKEQKEKKDGNLSIKEEVEKELNKKSTAELFRKIKNEKISFFLPFKCLPAQHRKLLFIS. Residues 58–345 form the ABC transmembrane type-1 1 domain; it reads FISFVCAVLS…ILPNITEYMK (288 aa). A helical membrane pass occupies residues 61-81; that stretch reads FVCAVLSGGTLPFFISVFGVI. At 82-90 the chain is on the vacuolar side; the sequence is LKNMNLGDD. A helical membrane pass occupies residues 91 to 111; it reads INPIILSLVSIGLVQFILSMI. Over 112-168 the chain is Cytoplasmic; the sequence is SSYCMDVITSKILKTLKLEYLRSVFYQDGQFHDNNPGSKLRSDLDFYLEQVSSGIGT. A helical transmembrane segment spans residues 169 to 189; the sequence is KFITIFTYASSFLGLYIWSLI. Over 190-191 the chain is Vacuolar; that stretch reads KN. A helical membrane pass occupies residues 192 to 212; the sequence is ARLTLCITCVFPLIYVCGVIC. At 213-275 the chain is on the cytoplasmic side; that stretch reads NKKVKLNKKT…KYILKANFVE (63 aa). A helical membrane pass occupies residues 276–296; the sequence is ALHIGLINGLILVSYAFGFWY. The Vacuolar portion of the chain corresponds to 297 to 316; sequence GTRIIINSATNQYPNNDFNG. A helical membrane pass occupies residues 317–337; it reads ASVISILLGVLISMFMLTIIL. The Cytoplasmic segment spans residues 338–788; that stretch reads PNITEYMKAL…YKEIFSYKKD (451 aa). One can recognise an ABC transporter 1 domain in the interval 378–662; that stretch reads IEFKNVRFHY…NNNNNNNNNK (285 aa). ATP is bound by residues tyrosine 387, threonine 389, arginine 390, serine 415, cysteine 417, glycine 418, lysine 419, serine 420, threonine 421, glutamine 462, lysine 562, serine 564, glycine 566, and glutamine 567. Glutamine 462 provides a ligand contact to Mg(2+). Disordered regions lie at residues 639–665 and 697–752; these read ERSDNNNNNNNDDNNNNNNNNNNKINN and SSNK…TAEN. 2 stretches are compositionally biased toward low complexity: residues 643–665 and 697–715; these read NNNNNNNDDNNNNNNNNNNKINN and SSNKSSNNGNDNGSDNKSS. A compositionally biased stretch (polar residues) spans 723-749; the sequence is GNDADNMNSLSIHENENISNNRNCKNT. The chain crosses the membrane as a helical span at residues 789 to 809; the sequence is VTIIFFSILVAGGLYPVFALL. Positions 791–1083 constitute an ABC transmembrane type-1 2 domain; the sequence is IIFFSILVAG…GSYAGKLMSL (293 aa). The Vacuolar portion of the chain corresponds to 810 to 829; sequence YARYVSTLFDFANLEYNSNK. Residues 830-850 traverse the membrane as a helical segment; it reads YSIYILLIAIAMFISETLKNY. Residues 851 to 907 lie on the Cytoplasmic side of the membrane; that stretch reads YNNKIGEKVEKTMKRRLFENILYQEMSFFDQDKNTPGVLSAHINRDVHLLKTGLVNN. The next 2 helical transmembrane spans lie at 908–928 and 929–949; these read IVIFSHFIMLFLVSMVMSFYF and CPIVAAVLTFIYFINMRVFAV. At 950–1032 the chain is on the cytoplasmic side; the sequence is RARLTKSKEI…RIIVNAALWG (83 aa). Residues 1033–1053 traverse the membrane as a helical segment; the sequence is FSQSAQLFINSFAYWFGSFLI. The Vacuolar portion of the chain corresponds to 1054 to 1057; that stretch reads KRGT. A helical membrane pass occupies residues 1058–1078; the sequence is ILVDDFMKSLFTFIFTGSYAG. Over 1079-1419 the chain is Cytoplasmic; the sequence is KLMSLKGDSE…IYKKYVKLAK (341 aa). Residues 1126–1416 form the ABC transporter 2 domain; that stretch reads VDIKDVNFRY…QDGIYKKYVK (291 aa). Residues tyrosine 1135, arginine 1138, threonine 1163, glycine 1164, glycine 1166, lysine 1167, serine 1168, threonine 1169, glutamine 1256, leucine 1312, serine 1313, glycine 1315, and glutamine 1316 each coordinate ATP. Serine 1168 lines the Mg(2+) pocket. Residue glutamine 1256 coordinates Mg(2+).

Belongs to the ABC transporter superfamily. ABCB family. Multidrug resistance exporter (TC 3.A.1.201) subfamily.

It localises to the vacuole membrane. The enzyme catalyses ATP + H2O + xenobioticSide 1 = ADP + phosphate + xenobioticSide 2.. Functionally, energy-dependent efflux pump responsible for decreased drug accumulation in multidrug-resistant cells. Transports lumefantrine, mefloquine, chloroquine, quinine, quinidine, amodiaquine, piperaquine, dihydroartemisinin and quinacrine. The sequence is that of Multidrug resistance protein 1 from Plasmodium falciparum (isolate 3D7).